We begin with the raw amino-acid sequence, 64 residues long: Large ribosomal subunit protein uL29 (64 aa).

It belongs to the universal ribosomal protein uL29 family.

This Pseudomonas entomophila (strain L48) protein is Large ribosomal subunit protein uL29.